A 438-amino-acid polypeptide reads, in one-letter code: 23S rRNA (uracil(1939)-C(5))-methyltransferase RlmD (438 aa).

The TRAM domain occupies 8–68 (KQKTNNVQTI…RQYGHATAKK (61 aa)). Positions 81, 87, 90, and 168 each coordinate [4Fe-4S] cluster. Positions 271, 300, 305, 321, 348, and 369 each coordinate S-adenosyl-L-methionine. The Nucleophile role is filled by cysteine 395.

The protein belongs to the class I-like SAM-binding methyltransferase superfamily. RNA M5U methyltransferase family. RlmD subfamily.

It carries out the reaction uridine(1939) in 23S rRNA + S-adenosyl-L-methionine = 5-methyluridine(1939) in 23S rRNA + S-adenosyl-L-homocysteine + H(+). In terms of biological role, catalyzes the formation of 5-methyl-uridine at position 1939 (m5U1939) in 23S rRNA. This Haemophilus influenzae (strain 86-028NP) protein is 23S rRNA (uracil(1939)-C(5))-methyltransferase RlmD.